The sequence spans 346 residues: LRP2-binding protein (346 aa).

The TPR repeat unit spans residues 58–91 (AMAYFLRGQLYFEEGWYEEALAQFEEIQEKDHQA). Sel1-like repeat units follow at residues 92-124 (IYQL…DSSC), 132-167 (FAAA…DNGN), 172-205 (VKAQ…GNGS), 206-241 (LESQ…ERGN), 242-276 (VYAQ…EVHD), and 296-331 (AMAA…RLNP).

Interacts with LRP2.

Its subcellular location is the cytoplasm. In terms of biological role, may act as an adapter that regulates LRP2 function. The protein is LRP2-binding protein (Lrp2bp) of Mus musculus (Mouse).